The primary structure comprises 169 residues: Cysteine synthase B (169 aa).

N6-(pyridoxal phosphate)lysine is present on Lys-45. Asn-75 provides a ligand contact to pyridoxal 5'-phosphate. The tract at residues 146–169 (ANGDNPEAHYTSTGPEIWRQTGGT) is disordered.

This sequence belongs to the cysteine synthase/cystathionine beta-synthase family. Pyridoxal 5'-phosphate serves as cofactor.

It carries out the reaction O-acetyl-L-serine + hydrogen sulfide = L-cysteine + acetate. Its pathway is amino-acid biosynthesis; L-cysteine biosynthesis; L-cysteine from L-serine: step 2/2. The chain is Cysteine synthase B (cysM) from Pseudomonas syringae pv. syringae.